The sequence spans 189 residues: Elongation factor P (189 aa).

Belongs to the elongation factor P family.

It localises to the cytoplasm. It participates in protein biosynthesis; polypeptide chain elongation. Functionally, involved in peptide bond synthesis. Stimulates efficient translation and peptide-bond synthesis on native or reconstituted 70S ribosomes in vitro. Probably functions indirectly by altering the affinity of the ribosome for aminoacyl-tRNA, thus increasing their reactivity as acceptors for peptidyl transferase. The polypeptide is Elongation factor P (Orientia tsutsugamushi (strain Ikeda) (Rickettsia tsutsugamushi)).